The sequence spans 303 residues: Sodium/potassium-transporting ATPase subunit beta-1 (303 aa).

Residues 1-34 (MPAATKDSDGGWKKFLWNSEKKEFLGRTGGSWAK) lie on the Cytoplasmic side of the membrane. Residues 35–55 (ILLFYVIFYGCLAGIFIGTIQ) form a helical; Signal-anchor for type II membrane protein membrane-spanning segment. The Extracellular portion of the chain corresponds to 56 to 303 (ALLLTINDFK…FDVKFTINES (248 aa)). Asn113 is a glycosylation site (N-linked (GlcNAc...) asparagine). 2 disulfides stabilise this stretch: Cys126-Cys149 and Cys159-Cys175. 2 N-linked (GlcNAc...) asparagine glycosylation sites follow: Asn194 and Asn264. A disulfide bridge connects residues Cys214 and Cys275.

This sequence belongs to the X(+)/potassium ATPases subunit beta family. As to quaternary structure, the sodium/potassium-transporting ATPase is composed of a catalytic alpha subunit, an auxiliary non-catalytic beta subunit and an additional regulatory subunit. In terms of tissue distribution, detected in all tissues except liver and cardiac muscle. Highest levels found in intestine, ovary and kidney with marginally lower levels in brain, spleen, esophagus, eye and pancreas, intermediate levels in gill and low levels in white and red skeletal muscle.

It is found in the cell membrane. Functionally, this is the non-catalytic component of the active enzyme, which catalyzes the hydrolysis of ATP coupled with the exchange of Na(+) and K(+) ions across the plasma membrane. The beta subunit regulates, through assembly of alpha/beta heterodimers, the number of sodium pumps transported to the plasma membrane. The protein is Sodium/potassium-transporting ATPase subunit beta-1 (atp1b1) of Anguilla anguilla (European freshwater eel).